Consider the following 405-residue polypeptide: Phosphopentomutase (405 aa).

Residues Asp-10, Asp-303, His-308, Asp-344, His-345, and His-356 each coordinate Mn(2+).

It belongs to the phosphopentomutase family. Mn(2+) serves as cofactor.

The protein localises to the cytoplasm. The enzyme catalyses 2-deoxy-alpha-D-ribose 1-phosphate = 2-deoxy-D-ribose 5-phosphate. It catalyses the reaction alpha-D-ribose 1-phosphate = D-ribose 5-phosphate. Its pathway is carbohydrate degradation; 2-deoxy-D-ribose 1-phosphate degradation; D-glyceraldehyde 3-phosphate and acetaldehyde from 2-deoxy-alpha-D-ribose 1-phosphate: step 1/2. In terms of biological role, isomerase that catalyzes the conversion of deoxy-ribose 1-phosphate (dRib-1-P) and ribose 1-phosphate (Rib-1-P) to deoxy-ribose 5-phosphate (dRib-5-P) and ribose 5-phosphate (Rib-5-P), respectively. The protein is Phosphopentomutase of Shewanella frigidimarina (strain NCIMB 400).